The following is a 545-amino-acid chain: Bifunctional purine biosynthesis protein PurH (545 aa).

One can recognise an MGS-like domain in the interval 1 to 150; that stretch reads MTNTNRPIRR…KNHATVAIVT (150 aa).

Belongs to the PurH family.

It carries out the reaction (6R)-10-formyltetrahydrofolate + 5-amino-1-(5-phospho-beta-D-ribosyl)imidazole-4-carboxamide = 5-formamido-1-(5-phospho-D-ribosyl)imidazole-4-carboxamide + (6S)-5,6,7,8-tetrahydrofolate. The enzyme catalyses IMP + H2O = 5-formamido-1-(5-phospho-D-ribosyl)imidazole-4-carboxamide. The protein operates within purine metabolism; IMP biosynthesis via de novo pathway; 5-formamido-1-(5-phospho-D-ribosyl)imidazole-4-carboxamide from 5-amino-1-(5-phospho-D-ribosyl)imidazole-4-carboxamide (10-formyl THF route): step 1/1. It participates in purine metabolism; IMP biosynthesis via de novo pathway; IMP from 5-formamido-1-(5-phospho-D-ribosyl)imidazole-4-carboxamide: step 1/1. The chain is Bifunctional purine biosynthesis protein PurH from Bifidobacterium longum (strain DJO10A).